The sequence spans 438 residues: Ammonium transporter Rh type A (438 aa).

At 1–4 (MRFK) the chain is on the cytoplasmic side. A helical membrane pass occupies residues 5-25 (FPLMAISLEVAMIVLFGLFVE). Residues 26-61 (YETPQNASQKNASHQNASQQGNTSSSAKKDQFFQLY) lie on the Extracellular side of the membrane. N-linked (GlcNAc...) asparagine glycans are attached at residues Asn-31, Asn-36, Asn-41, and Asn-47. Residues 62–82 (PLFQDVHVMIFVGFGFLMTFL) traverse the membrane as a helical segment. Over 83–86 (KKYG) the chain is Cytoplasmic. The chain crosses the membrane as a helical span at residues 87–107 (FSGVGFNLFLAALGLQWGTIM). Topologically, residues 108-121 (QGLLHSHGKEFHFG) are extracellular. A helical transmembrane segment spans residues 122–142 (IYNMINADFSTATVLISFGAV). The Cytoplasmic portion of the chain corresponds to 143–148 (LGKTSP). A helical membrane pass occupies residues 149–169 (IQMLIMTILEIAVFAGNEYLV). The Extracellular segment spans residues 170-178 (TELFEASDT). Residues 179 to 199 (GASMTIHAFGAYFGLAVAGVL) traverse the membrane as a helical segment. At 200–218 (YRPGLRCEHPNDESVYHSD) the chain is on the cytoplasmic side. The chain crosses the membrane as a helical span at residues 219–239 (LFAMIGTLFLWIFWPSFNSAI). Topologically, residues 240–249 (ADPGDHQYRA) are extracellular. The chain crosses the membrane as a helical span at residues 250–270 (IVNTYMSLAACVITAYALSSL). Residues 271 to 278 (VERRGRLD) are Cytoplasmic-facing. The chain crosses the membrane as a helical span at residues 279–296 (MVHIQNATLAGGVAVGTC). Residues 297 to 300 (ADME) lie on the Extracellular side of the membrane. The chain crosses the membrane as a helical span at residues 301-321 (IPLYAAMTIGSIAGIISVLGY). At 322-342 (KFFSPLLANKLMIHDTCGVHN) the chain is on the cytoplasmic side. The chain crosses the membrane as a helical span at residues 343–363 (LHGLPGVFGGLASIVAISWGM). The Extracellular portion of the chain corresponds to 364–372 (STASMAMQA). A helical transmembrane segment spans residues 373–393 (AALGSSIGSAIVGGLLTGLIL). Over 394–438 (KLPIWNQPPDEYCYDDSVSWKVPKFRELDNRFFQHANHNHVEHEV) the chain is Cytoplasmic.

The protein belongs to the ammonium transporter (TC 2.A.49) family. Rh subfamily. Homodimer. Heterotrimer; a RHCE monomer interacts with a RHAG homodimer. Component of the ankyrin-1 complex in the erythrocyte, composed of ANK1, RHCE, RHAG, SLC4A1, EPB42, GYPA, GYPB and AQP1. Interacts with GYPB (via the N-terminal); this interaction bridges the (RHAG)2(RHCE) heterotrimer with the SLC4A1 Band 3 I dimer complexed with GYPA. In terms of processing, glycosylated.

It is found in the membrane. It catalyses the reaction methylamine(out) = methylamine(in). It carries out the reaction NH4(+)(in) = NH4(+)(out). The catalysed reaction is CO2(out) = CO2(in). In terms of biological role, component of the ankyrin-1 complex, a multiprotein complex involved in the stability and shape of the erythrocyte membrane. Heterotrimer with RHCE (RHAG)2(RHCE), that transports ammonium and its related derivative methylammonium, in both neutral and ionic forms, across the erythrocyte membrane. The transport of NH4(+) is electrogenic and masks the NH3 transport. Also, may act as a CO2 channel. Moreover in erythrocyte, regulates RHD membrane expression and is associated with rhesus blood group antigen expression. This chain is Ammonium transporter Rh type A, found in Mus musculus (Mouse).